The primary structure comprises 338 residues: Holliday junction branch migration complex subunit RuvB (338 aa).

Residues 4 to 186 (ADRLIAPDNP…FGITQRLEYY (183 aa)) form a large ATPase domain (RuvB-L) region. Residues Ile-25, Arg-26, Gly-67, Lys-70, Thr-71, Thr-72, 133–135 (EDY), Arg-176, Tyr-186, and Arg-223 each bind ATP. Thr-71 lines the Mg(2+) pocket. The interval 187 to 257 (KVEDLQNIVQ…VADKALNMLD (71 aa)) is small ATPAse domain (RuvB-S). Residues 260–338 (AKGFDYMDRK…HFGIDKPSNR (79 aa)) are head domain (RuvB-H). Positions 296, 315, and 320 each coordinate DNA.

It belongs to the RuvB family. Homohexamer. Forms an RuvA(8)-RuvB(12)-Holliday junction (HJ) complex. HJ DNA is sandwiched between 2 RuvA tetramers; dsDNA enters through RuvA and exits via RuvB. An RuvB hexamer assembles on each DNA strand where it exits the tetramer. Each RuvB hexamer is contacted by two RuvA subunits (via domain III) on 2 adjacent RuvB subunits; this complex drives branch migration. In the full resolvosome a probable DNA-RuvA(4)-RuvB(12)-RuvC(2) complex forms which resolves the HJ.

The protein localises to the cytoplasm. It carries out the reaction ATP + H2O = ADP + phosphate + H(+). Its function is as follows. The RuvA-RuvB-RuvC complex processes Holliday junction (HJ) DNA during genetic recombination and DNA repair, while the RuvA-RuvB complex plays an important role in the rescue of blocked DNA replication forks via replication fork reversal (RFR). RuvA specifically binds to HJ cruciform DNA, conferring on it an open structure. The RuvB hexamer acts as an ATP-dependent pump, pulling dsDNA into and through the RuvAB complex. RuvB forms 2 homohexamers on either side of HJ DNA bound by 1 or 2 RuvA tetramers; 4 subunits per hexamer contact DNA at a time. Coordinated motions by a converter formed by DNA-disengaged RuvB subunits stimulates ATP hydrolysis and nucleotide exchange. Immobilization of the converter enables RuvB to convert the ATP-contained energy into a lever motion, pulling 2 nucleotides of DNA out of the RuvA tetramer per ATP hydrolyzed, thus driving DNA branch migration. The RuvB motors rotate together with the DNA substrate, which together with the progressing nucleotide cycle form the mechanistic basis for DNA recombination by continuous HJ branch migration. Branch migration allows RuvC to scan DNA until it finds its consensus sequence, where it cleaves and resolves cruciform DNA. The polypeptide is Holliday junction branch migration complex subunit RuvB (Vibrio atlanticus (strain LGP32) (Vibrio splendidus (strain Mel32))).